The sequence spans 334 residues: Pantothenate synthetase (334 aa).

34 to 41 (MGALHEGH) contacts ATP. The active-site Proton donor is the His41. Gln71 is a binding site for (R)-pantoate. Residue Gln71 coordinates beta-alanine. 158-161 (GQKD) serves as a coordination point for ATP. (R)-pantoate is bound at residue Gln164. Residues Val187 and 195 to 198 (LSSR) contribute to the ATP site. Residues 288–334 (PLMLGTRGPAGEASPPNRERSEPGSAEQNKSPGEARTTPSGTSEASE) form a disordered region. Positions 313–334 (AEQNKSPGEARTTPSGTSEASE) are enriched in polar residues.

This sequence belongs to the pantothenate synthetase family. As to quaternary structure, homodimer.

Its subcellular location is the cytoplasm. It carries out the reaction (R)-pantoate + beta-alanine + ATP = (R)-pantothenate + AMP + diphosphate + H(+). The protein operates within cofactor biosynthesis; (R)-pantothenate biosynthesis; (R)-pantothenate from (R)-pantoate and beta-alanine: step 1/1. Functionally, catalyzes the condensation of pantoate with beta-alanine in an ATP-dependent reaction via a pantoyl-adenylate intermediate. The chain is Pantothenate synthetase from Nocardioides sp. (strain ATCC BAA-499 / JS614).